Here is a 117-residue protein sequence, read N- to C-terminus: Large ribosomal subunit protein uL18 (117 aa).

It belongs to the universal ribosomal protein uL18 family. As to quaternary structure, part of the 50S ribosomal subunit; part of the 5S rRNA/L5/L18/L25 subcomplex. Contacts the 5S and 23S rRNAs.

This is one of the proteins that bind and probably mediate the attachment of the 5S RNA into the large ribosomal subunit, where it forms part of the central protuberance. This is Large ribosomal subunit protein uL18 from Pectobacterium carotovorum subsp. carotovorum (strain PC1).